The following is a 172-amino-acid chain: RNA silencing suppressor p19 (172 aa).

The segment covering 1 to 20 (MERAIQGNDAREQANSERWD) has biased composition (basic and acidic residues). Residues 1–38 (MERAIQGNDAREQANSERWDGGSGGTTSPFKLPDESPS) are disordered.

It belongs to the tombusviruses protein p19 family. Homodimer.

In terms of biological role, acts as a suppressor of RNA-mediated gene silencing, also known as post-transcriptional gene silencing (PTGS), a mechanism of plant viral defense that limits the accumulation of viral RNAs. Binds to short interfering RNAs (siRNAs) with high affinity. Acts as a molecular caliper to specifically select siRNAs based on the length of the duplex region of the RNA. The protein is RNA silencing suppressor p19 of Capsicum annuum (Capsicum pepper).